A 118-amino-acid polypeptide reads, in one-letter code: Large ribosomal subunit protein bL19 (118 aa).

The protein belongs to the bacterial ribosomal protein bL19 family.

Its function is as follows. This protein is located at the 30S-50S ribosomal subunit interface and may play a role in the structure and function of the aminoacyl-tRNA binding site. This chain is Large ribosomal subunit protein bL19, found in Wolinella succinogenes (strain ATCC 29543 / DSM 1740 / CCUG 13145 / JCM 31913 / LMG 7466 / NCTC 11488 / FDC 602W) (Vibrio succinogenes).